The following is a 152-amino-acid chain: UPF0178 protein Plav_1521 (152 aa).

The interval 114–152 is disordered; sequence LRETGQSKGGGPAFSKEDRSRFLRSLEDTVQAIRRRPPP. Residues 128–140 are compositionally biased toward basic and acidic residues; that stretch reads SKEDRSRFLRSLE.

It belongs to the UPF0178 family.

This Parvibaculum lavamentivorans (strain DS-1 / DSM 13023 / NCIMB 13966) protein is UPF0178 protein Plav_1521.